The following is a 174-amino-acid chain: ATP synthase subunit b (174 aa).

A helical membrane pass occupies residues 9-29 (LPNTSLIFWEVVTFLILLALL).

This sequence belongs to the ATPase B chain family. F-type ATPases have 2 components, F(1) - the catalytic core - and F(0) - the membrane proton channel. F(1) has five subunits: alpha(3), beta(3), gamma(1), delta(1), epsilon(1). F(0) has three main subunits: a(1), b(2) and c(10-14). The alpha and beta chains form an alternating ring which encloses part of the gamma chain. F(1) is attached to F(0) by a central stalk formed by the gamma and epsilon chains, while a peripheral stalk is formed by the delta and b chains.

Its subcellular location is the cell membrane. Functionally, f(1)F(0) ATP synthase produces ATP from ADP in the presence of a proton or sodium gradient. F-type ATPases consist of two structural domains, F(1) containing the extramembraneous catalytic core and F(0) containing the membrane proton channel, linked together by a central stalk and a peripheral stalk. During catalysis, ATP synthesis in the catalytic domain of F(1) is coupled via a rotary mechanism of the central stalk subunits to proton translocation. Its function is as follows. Component of the F(0) channel, it forms part of the peripheral stalk, linking F(1) to F(0). This is ATP synthase subunit b from Rubrobacter xylanophilus (strain DSM 9941 / JCM 11954 / NBRC 16129 / PRD-1).